Here is a 523-residue protein sequence, read N- to C-terminus: Polypyrimidine tract-binding protein 3 (523 aa).

Residues 1–25 are disordered; it reads MNSSTSAGVYANGNDNKKFKGDRPP. RRM domains are found at residues 30-114, 153-229, and 329-403; these read RVLH…NLPN, LRII…FSKL, and SVLL…LSKH. Residue Lys-36 forms a Glycyl lysine isopeptide (Lys-Gly) (interchain with G-Cter in SUMO2) linkage. A Phosphotyrosine modification is found at Tyr-98. Residue Thr-109 is modified to Phosphothreonine. A Glycyl lysine isopeptide (Lys-Gly) (interchain with G-Cter in SUMO2) cross-link involves residue Lys-187. N6-acetyllysine is present on Lys-394. Residues 406 to 426 form a disordered region; it reads VQLPREGQEDQGLTKDFSNSP. The residue at position 425 (Ser-425) is a Phosphoserine. One can recognise an RRM 4 domain in the interval 446 to 521; that stretch reads ATLHLSNIPP…HHLRVSFSKS (76 aa).

In terms of assembly, interacts with THBS4 (via the acidic amphipathic C-terminus).

RNA-binding protein that mediates pre-mRNA alternative splicing regulation. Plays a role in the regulation of cell proliferation, differentiation and migration. Positive regulator of EPO-dependent erythropoiesis. Participates in cell differentiation regulation by repressing tissue-specific exons. Promotes Fas exon 6 skipping. Binds RNA, preferentially to both poly(G) and poly(U). The protein is Polypyrimidine tract-binding protein 3 (Ptbp3) of Mus musculus (Mouse).